Reading from the N-terminus, the 491-residue chain is Nucleoside transporter 1.1 (491 aa).

Helical transmembrane passes span Phe-27–Val-47, Tyr-82–Phe-102, Val-109–Pro-129, Ala-136–Phe-156, Ser-173–Val-193, and Lys-209–Leu-229. A compositionally biased stretch (basic and acidic residues) spans Cys-260 to Arg-273. Disordered regions lie at residues Cys-260–Glu-280 and Ala-290–Val-309. A glycan (N-linked (GlcNAc...) asparagine) is linked at Asn-274. A run of 5 helical transmembrane segments spans residues Met-333–Val-353, Trp-361–Pro-381, Trp-395–Ser-415, Val-427–Gly-447, and Phe-460–Leu-480.

It belongs to the SLC29A/ENT transporter (TC 2.A.57) family.

The protein localises to the membrane. It catalyses the reaction adenosine(in) + H(+)(in) = adenosine(out) + H(+)(out). The catalysed reaction is uridine(in) + H(+)(in) = uridine(out) + H(+)(out). In terms of biological role, sodium-independent high affinity nucleoside:H(+) symporter; transports adenosine and uridine. Can transport cytidine and thymidine. The polypeptide is Nucleoside transporter 1.1 (Leishmania donovani).